Reading from the N-terminus, the 92-residue chain is UPF0298 protein ABC2380 (92 aa).

The protein belongs to the UPF0298 family.

The protein resides in the cytoplasm. The sequence is that of UPF0298 protein ABC2380 from Shouchella clausii (strain KSM-K16) (Alkalihalobacillus clausii).